Here is a 510-residue protein sequence, read N- to C-terminus: MTKRALISVSDKTGVVEFARSLTARGWEVLSTGGTFQALQEAGVSVTQVSDVTGFPEMLDGRVKTLHPAVHGGILARREPQHLSQLEAQGFGTIDLVCVNLYPFRETVARGAPDPEVIENIDIGGPAMIRSAAKNHSGVLVLVDPADYPVALQDEVSGSERRRLAAKAYRHTSEYDAAITAYLEGASEELPTRLPERLTVDLHRVAQVRYGENPHQPGAVYRWGQARGPVMDAQVVAGKPMSFNNYADADAAWSLCQELAAQEDGAVCVAVKHANPCGVAVADDVRAAWERARDADTLSVFGGVVAVSRPVDFQAAQAMRGTFLEVLIAPEVTPDAVEWFAEKKPDLRVLVAAQASGVSVLDVRPLTGGFAVQERDTRPWDDLCPEVVTARQPTDQEWADLRFAWATVKHARSNAVVLARGGVTVGLGAGAVSRIWAAERAVANAGDKAQGAVLASEAFFPFDDVVRLAAQSGVTAILQPGGAKRDPEVIAAANELGVSMVFTGSRHFRH.

One can recognise an MGS-like domain in the interval 1–143 (MTKRALISVS…KNHSGVLVLV (143 aa)).

Belongs to the PurH family.

The enzyme catalyses (6R)-10-formyltetrahydrofolate + 5-amino-1-(5-phospho-beta-D-ribosyl)imidazole-4-carboxamide = 5-formamido-1-(5-phospho-D-ribosyl)imidazole-4-carboxamide + (6S)-5,6,7,8-tetrahydrofolate. The catalysed reaction is IMP + H2O = 5-formamido-1-(5-phospho-D-ribosyl)imidazole-4-carboxamide. It functions in the pathway purine metabolism; IMP biosynthesis via de novo pathway; 5-formamido-1-(5-phospho-D-ribosyl)imidazole-4-carboxamide from 5-amino-1-(5-phospho-D-ribosyl)imidazole-4-carboxamide (10-formyl THF route): step 1/1. Its pathway is purine metabolism; IMP biosynthesis via de novo pathway; IMP from 5-formamido-1-(5-phospho-D-ribosyl)imidazole-4-carboxamide: step 1/1. This chain is Bifunctional purine biosynthesis protein PurH, found in Deinococcus deserti (strain DSM 17065 / CIP 109153 / LMG 22923 / VCD115).